The sequence spans 508 residues: Glycerol kinase (508 aa).

ADP is bound at residue Thr14. ATP-binding residues include Thr14, Thr15, and Ser16. Residue Thr14 coordinates sn-glycerol 3-phosphate. Arg18 is an ADP binding site. Sn-glycerol 3-phosphate contacts are provided by Arg84, Glu85, and Tyr136. Glycerol-binding residues include Arg84, Glu85, and Tyr136. A Phosphohistidine; by HPr modification is found at His232. Position 246 (Asp246) interacts with sn-glycerol 3-phosphate. 2 residues coordinate glycerol: Asp246 and Gln247. ADP contacts are provided by Thr268 and Gly311. Residues Thr268, Gly311, Gln315, and Gly412 each contribute to the ATP site. Positions 412 and 416 each coordinate ADP.

The protein belongs to the FGGY kinase family. Homotetramer and homodimer (in equilibrium). The phosphoenolpyruvate-dependent sugar phosphotransferase system (PTS), including enzyme I, and histidine-containing protein (HPr) are required for the phosphorylation, which leads to the activation of the enzyme.

It catalyses the reaction glycerol + ATP = sn-glycerol 3-phosphate + ADP + H(+). Its pathway is polyol metabolism; glycerol degradation via glycerol kinase pathway; sn-glycerol 3-phosphate from glycerol: step 1/1. Its activity is regulated as follows. Activated by phosphorylation and inhibited by fructose 1,6-bisphosphate (FBP). Its function is as follows. Key enzyme in the regulation of glycerol uptake and metabolism. Catalyzes the phosphorylation of glycerol to yield sn-glycerol 3-phosphate. The protein is Glycerol kinase of Streptococcus pyogenes serotype M12 (strain MGAS2096).